The primary structure comprises 329 residues: Bile salt hydrolase/transferase (329 aa).

Cysteine 2 acts as the Nucleophile; acyl-thioester intermediate in catalysis. Residues cysteine 2 and arginine 18 each contribute to the deoxycholate site. A taurine-binding site is contributed by asparagine 82.

It belongs to the peptidase C59 family. In terms of assembly, homotetramer. The tetramer consists of a dimer of dimers.

It catalyses the reaction glycocholate + H2O = cholate + glycine. The catalysed reaction is cholate + taurine = taurocholate + H2O. The enzyme catalyses taurodeoxycholate + H2O = deoxycholate + taurine. It carries out the reaction glycodeoxycholate + H2O = deoxycholate + glycine. It catalyses the reaction chenodeoxycholate + glycine = glycochenodeoxycholate + H2O. The catalysed reaction is taurochenodeoxycholate + H2O = chenodeoxycholate + taurine. The enzyme catalyses an L-alpha-amino acid + cholate = an N-choloyl-L-alpha-amino acid + H2O. It carries out the reaction an L-alpha-amino acid + taurocholate = an N-choloyl-L-alpha-amino acid + taurine. It catalyses the reaction glycocholate + an L-alpha-amino acid = an N-choloyl-L-alpha-amino acid + glycine. The catalysed reaction is cholate + L-histidine = L-histidocholate + H2O. The enzyme catalyses taurocholate + L-histidine = L-histidocholate + taurine. It carries out the reaction glycocholate + L-histidine = L-histidocholate + glycine. It catalyses the reaction cholate + L-arginine = L-arginocholate + H2O. The catalysed reaction is taurocholate + L-arginine = L-arginocholate + taurine. The enzyme catalyses glycocholate + L-arginine = L-arginocholate + glycine. It carries out the reaction cholate + L-phenylalanine = L-phenylalanocholate + H2O. It catalyses the reaction taurocholate + L-phenylalanine = L-phenylalanocholate + taurine. The protein operates within lipid metabolism; bile acid biosynthesis. Functionally, possesses dual functions in bile acid metabolism. Acts as a bile salt hydrolase that catalyzes the deconjugation of glycine- and taurine-linked bile salts, which occurs naturally in the intestines of humans, releasing amino acid residues and deconjugated bile salts (bile acids). Can hydrolyze the amide bond in major human conjugated bile salts, such as glycocholate (GCA), taurocholate (TCA) and taurodeoxycholate (TDCA). Shows a slight preference for taurine-conjugated bile acids as substrates. Also acts as an amine N-acyltransferase that conjugates a wide variety of amino acids to conjugated and non-conjugated bile acids, thus producing bacterial bile acid amidates (BBAAs) - also named microbially conjugated bile acids (MCBAs) - in the gastrointestinal tract. These BBAAs may facilitate communication between the microbiota and host through the activation of human ligand-activated transcription factors. This chain is Bile salt hydrolase/transferase (cbh), found in Clostridium perfringens (strain 13 / Type A).